Consider the following 1154-residue polypeptide: DNA-directed RNA polymerase, mitochondrial (1154 aa).

The N-terminal 30 residues, 1–30, are a transit peptide targeting the mitochondrion; sequence MLRRKIQTYLSRSHIRRGLCGLRFFQTQRL. The disordered stretch occupies residues 221–243; that stretch reads ESENGKDQNGDSSLKEKQPDVET. Over residues 223–240 the composition is skewed to basic and acidic residues; that stretch reads ENGKDQNGDSSLKEKQPD. Active-site residues include Asp-821, Lys-890, and Asp-1061.

The protein belongs to the phage and mitochondrial RNA polymerase family.

It is found in the mitochondrion. It carries out the reaction RNA(n) + a ribonucleoside 5'-triphosphate = RNA(n+1) + diphosphate. DNA-dependent RNA polymerase catalyzes the transcription of DNA into RNA using the four ribonucleoside triphosphates as substrates. Combines in the mitochondrion with mitochondrial transcription factor mtf1 as a holoenzyme to recognize and initiate transcription at the core mitochondrial promoters. This Schizosaccharomyces pombe (strain 972 / ATCC 24843) (Fission yeast) protein is DNA-directed RNA polymerase, mitochondrial (rpo41).